The following is a 230-amino-acid chain: Orotidine 5'-phosphate decarboxylase (230 aa).

Substrate contacts are provided by residues Asp-16, Lys-38, 65–74 (DLKLHDIGNT), Thr-119, Arg-180, Gln-189, Gly-209, and Arg-210. Lys-67 serves as the catalytic Proton donor.

Belongs to the OMP decarboxylase family. Type 1 subfamily. Homodimer.

It catalyses the reaction orotidine 5'-phosphate + H(+) = UMP + CO2. It functions in the pathway pyrimidine metabolism; UMP biosynthesis via de novo pathway; UMP from orotate: step 2/2. Catalyzes the decarboxylation of orotidine 5'-monophosphate (OMP) to uridine 5'-monophosphate (UMP). The protein is Orotidine 5'-phosphate decarboxylase of Methylobacterium radiotolerans (strain ATCC 27329 / DSM 1819 / JCM 2831 / NBRC 15690 / NCIMB 10815 / 0-1).